The following is a 234-amino-acid chain: Sperm-associated microtubule inner protein 5 (234 aa).

Microtubule inner protein component of sperm flagellar doublet microtubules. Expressed in testis (at protein level). Strongly expressed in peritubular cells and Leydig cells and weakly expressed in the cytoplasm of spermatocytes.

The protein localises to the cytoplasm. It is found in the cytoskeleton. It localises to the flagellum axoneme. The protein resides in the nucleus. Functionally, microtubule inner protein (MIP) part of the dynein-decorated doublet microtubules (DMTs) in flagellum axoneme. May serve to reinforce and thus stabilize the microtubule structure in the sperm flagella. This Homo sapiens (Human) protein is Sperm-associated microtubule inner protein 5.